The following is a 400-amino-acid chain: DNA primase small subunit PriS (400 aa).

Active-site residues include D98, D100, and D306.

The protein belongs to the eukaryotic-type primase small subunit family. As to quaternary structure, heterodimer of a small subunit (PriS) and a large subunit (PriL). It depends on Mg(2+) as a cofactor. The cofactor is Mn(2+).

Catalytic subunit of DNA primase, an RNA polymerase that catalyzes the synthesis of short RNA molecules used as primers for DNA polymerase during DNA replication. The small subunit contains the primase catalytic core and has DNA synthesis activity on its own. Binding to the large subunit stabilizes and modulates the activity, increasing the rate of DNA synthesis while decreasing the length of the DNA fragments, and conferring RNA synthesis capability. The DNA polymerase activity may enable DNA primase to also catalyze primer extension after primer synthesis. May also play a role in DNA repair. The protein is DNA primase small subunit PriS of Methanocella arvoryzae (strain DSM 22066 / NBRC 105507 / MRE50).